The primary structure comprises 123 residues: Large ribosomal subunit protein uL14 (123 aa).

It belongs to the universal ribosomal protein uL14 family. Part of the 50S ribosomal subunit. Forms a cluster with proteins L3 and L19. In the 70S ribosome, L14 and L19 interact and together make contacts with the 16S rRNA in bridges B5 and B8.

Binds to 23S rRNA. Forms part of two intersubunit bridges in the 70S ribosome. This is Large ribosomal subunit protein uL14 from Chromohalobacter salexigens (strain ATCC BAA-138 / DSM 3043 / CIP 106854 / NCIMB 13768 / 1H11).